The chain runs to 616 residues: Probable Xaa-Pro aminopeptidase P (616 aa).

Mn(2+)-binding residues include D413, D424, E522, and E536.

Belongs to the peptidase M24B family. Mn(2+) is required as a cofactor.

It catalyses the reaction Release of any N-terminal amino acid, including proline, that is linked to proline, even from a dipeptide or tripeptide.. In terms of biological role, catalyzes the removal of a penultimate prolyl residue from the N-termini of peptides. The sequence is that of Probable Xaa-Pro aminopeptidase P (AMPP) from Paracoccidioides lutzii (strain ATCC MYA-826 / Pb01) (Paracoccidioides brasiliensis).